A 220-amino-acid chain; its full sequence is Late transcription elongation factor OPG087 (220 aa).

It belongs to the orthopoxvirus OPG087 family. Interacts with H5 and A18. Might be part of a transcription complex composed at least of OPG087, OPG145, and OPG110.

Its function is as follows. Involved in postreplicative transcription elongation on intermediate and late genes. The protein is Late transcription elongation factor OPG087 (OPG087) of Homo sapiens (Human).